We begin with the raw amino-acid sequence, 391 residues long: Methyltransferase/ribosomally synthesized type I borosin cyclic peptide precursor cmaMA (391 aa).

The segment at 1–253 (MDATANPKAG…TISTFYLPPK (253 aa)) is methyltransferase domain. Active-site residues include Arg-72, Tyr-76, and Tyr-98. Positions 98, 100, 103, 130, 172, 215, 246, and 247 each coordinate S-adenosyl-L-methionine. Positions 254 to 373 (APSAKVSLNR…AQLSGALKEG (120 aa)) are clasp domain. Residues 374 to 376 (GVP) are precursor leader. Leu-382 is modified (N-methylleucine). N-methylphenylalanine is present on residues Phe-385 and Phe-386. Residues Ile-387 and Ile-388 each carry the N-methylisoleucine modification.

In the N-terminal section; belongs to the precorrin methyltransferase family. In terms of assembly, homodimer. In terms of processing, cmaMA automethylates at Leu-382, Phe-385, Phe-386, Ile-387 and Ile-388 before being processed by the prolyloligopeptidase ledP which likely forms a peptidyl ester upon removal of the follower propeptide, which then undergoes macrocyclization with the N-terminus of the modified core peptide. Peptide backbone alpha-N-methylations change the physicochemical properties of amide bonds to provide structural constraints and other favorable characteristics including biological membrane permeability to peptides.

Its pathway is secondary metabolite biosynthesis. In terms of biological role, fusion protein of the methyltransferase cmaM and a type I borosin core peptide; part of the gene cluster that mediates the biosynthesis of a type I borosin, a highly methylated cyclic peptide with potent biological activities. Type I borosins derive from the C-terminus of the fusion protein, and it is the same protein that methylates its own C-terminus using S-adenosyl methionine (SAM). The C-terminus is subsequently cleaved off and macrocyclized by a prolyloligopeptidase to give the final product. The protein is Methyltransferase/ribosomally synthesized type I borosin cyclic peptide precursor cmaMA of Coprinopsis marcescibilis (Agaric fungus).